The chain runs to 254 residues: 3-deoxy-manno-octulosonate cytidylyltransferase (254 aa).

This sequence belongs to the KdsB family.

The protein localises to the cytoplasm. The catalysed reaction is 3-deoxy-alpha-D-manno-oct-2-ulosonate + CTP = CMP-3-deoxy-beta-D-manno-octulosonate + diphosphate. It functions in the pathway nucleotide-sugar biosynthesis; CMP-3-deoxy-D-manno-octulosonate biosynthesis; CMP-3-deoxy-D-manno-octulosonate from 3-deoxy-D-manno-octulosonate and CTP: step 1/1. Its pathway is bacterial outer membrane biogenesis; lipopolysaccharide biosynthesis. In terms of biological role, activates KDO (a required 8-carbon sugar) for incorporation into bacterial lipopolysaccharide in Gram-negative bacteria. The chain is 3-deoxy-manno-octulosonate cytidylyltransferase from Pseudomonas syringae pv. syringae (strain B728a).